A 709-amino-acid polypeptide reads, in one-letter code: ATP-binding cassette sub-family F member 3 (709 aa).

Alanine 2 is subject to N-acetylalanine. Basic and acidic residues predominate over residues 129–143 (RLKAKQEKRSEKETL). A disordered region spans residues 129–171 (RLKAKQEKRSEKETLKTSSPLVLEEASASQAGSRKESRLESSG). A phosphoserine mark is found at serine 155, serine 157, and serine 161. Positions 161-171 (SRKESRLESSG) are enriched in basic and acidic residues. ABC transporter domains follow at residues 178–424 (VRIE…LNQQ) and 492–707 (LQLD…RREG). Residue 210–217 (GRNGLGKT) participates in ATP binding. Serine 283 carries the phosphoserine modification. 525-532 (GENGAGKS) provides a ligand contact to ATP.

The protein belongs to the ABC transporter superfamily. ABCF family. EF3 subfamily.

Displays an antiviral effect against flaviviruses such as west Nile virus (WNV) in the presence of OAS1B. This is ATP-binding cassette sub-family F member 3 (Abcf3) from Rattus norvegicus (Rat).